The primary structure comprises 345 residues: UPF0324 membrane protein HH_1161 (345 aa).

The next 10 helical transmembrane spans lie at 7–29 (GFLY…SATL), 33–50 (LSPL…SPFY), 90–112 (LGLN…AIFI), 122–141 (ISLL…ILAL), 154–176 (VALG…IYYA), 186–208 (WGIF…AISP), 215–237 (IIVK…YIIF), 262–281 (LYIP…NSFI), 293–312 (FASK…QIDW), and 322–344 (TFAL…VYIM).

It belongs to the UPF0324 family.

It localises to the cell membrane. The polypeptide is UPF0324 membrane protein HH_1161 (Helicobacter hepaticus (strain ATCC 51449 / 3B1)).